Consider the following 919-residue polypeptide: Sarcosine dehydrogenase, mitochondrial (919 aa).

Residues 1–22 constitute a mitochondrion transit peptide; sequence MASLSRVLRVAATCPRGRAAWN. N6-succinyllysine is present on lysine 38. The residue at position 109 (histidine 109) is a Tele-8alpha-FAD histidine. Position 174 is an N6-acetyllysine; alternate (lysine 174). Lysine 174 is modified (N6-succinyllysine; alternate). An N6-succinyllysine mark is found at lysine 278, lysine 378, lysine 392, and lysine 535. Lysine 560 and lysine 776 each carry N6-acetyllysine. Residue tyrosine 778 is modified to Phosphotyrosine. Lysine 803, lysine 885, and lysine 905 each carry N6-acetyllysine; alternate. An N6-succinyllysine; alternate mark is found at lysine 803, lysine 885, and lysine 905.

The protein belongs to the GcvT family. It depends on FAD as a cofactor.

It localises to the mitochondrion matrix. It catalyses the reaction (6S)-5,6,7,8-tetrahydrofolyl-(gamma-L-Glu)(n) + sarcosine + oxidized [electron-transfer flavoprotein] + H(+) = (6R)-5,10-methylenetetrahydrofolyl-(gamma-L-Glu)(n) + reduced [electron-transfer flavoprotein] + glycine. Its pathway is amine and polyamine degradation; sarcosine degradation; formaldehyde and glycine from sarcosine: step 1/1. Functionally, catalyzes the last step of the oxidative degradation of choline to glycine. Converts sarcosine into glycine. This Mus musculus (Mouse) protein is Sarcosine dehydrogenase, mitochondrial.